Consider the following 189-residue polypeptide: Apolipoprotein D (189 aa).

Residues 1 to 20 (MVPVLLLLPALAGLFGAAEG) form the signal peptide. Gln-21 is subject to Pyrrolidone carboxylic acid. 2 disulfide bridges follow: Cys-28–Cys-134 and Cys-61–Cys-185. Residues Asn-65 and Asn-98 are each glycosylated (N-linked (GlcNAc...) asparagine).

This sequence belongs to the calycin superfamily. Lipocalin family. As to quaternary structure, homodimer.

The protein resides in the secreted. Functionally, APOD occurs in the macromolecular complex with lecithin-transport and binding of bilin. Appears to be able to transport a variety of ligands in a number of different contexts. The protein is Apolipoprotein D (APOD) of Bos taurus (Bovine).